A 523-amino-acid chain; its full sequence is Solute carrier family 35 member F5 (523 aa).

2 helical membrane passes run 69–89 and 101–121; these read MALG…SSEL and FFST…FIIW. Residue Ser-207 is modified to Phosphoserine. Transmembrane regions (helical) follow at residues 243 to 263, 268 to 288, 296 to 316, 327 to 347, 361 to 381, 395 to 415, 420 to 440, and 452 to 472; these read ISFF…EALS, AIVN…AAVF, FTLS…LVNL, TIGS…IVMI, MFFG…FFLL, VVLM…EFLW, FLTS…LSII, and WLFF…TLLC. The EamA domain maps to 252 to 316; the sequence is FLANLSYQEA…SIGGVVLVNL (65 aa).

Belongs to the SLC35F solute transporter family.

Its subcellular location is the membrane. Its function is as follows. Putative solute transporter. In Pongo abelii (Sumatran orangutan), this protein is Solute carrier family 35 member F5 (SLC35F5).